Here is a 311-residue protein sequence, read N- to C-terminus: Malate dehydrogenase (311 aa).

Residues 7-13 (GAAGGIG) and Asp-34 contribute to the NAD(+) site. The substrate site is built by Arg-81 and Arg-87. NAD(+)-binding positions include Asn-94 and 117-119 (ITN). Substrate is bound by residues Asn-119 and Arg-153. His-177 functions as the Proton acceptor in the catalytic mechanism. Residue Met-227 participates in NAD(+) binding.

Belongs to the LDH/MDH superfamily. MDH type 1 family. Homodimer.

The enzyme catalyses (S)-malate + NAD(+) = oxaloacetate + NADH + H(+). In terms of biological role, catalyzes the reversible oxidation of malate to oxaloacetate. This Aliivibrio salmonicida (strain LFI1238) (Vibrio salmonicida (strain LFI1238)) protein is Malate dehydrogenase.